Consider the following 678-residue polypeptide: DNA ligase (678 aa).

NAD(+)-binding positions include 35–39 (DEEYD), 84–85 (SL), and glutamate 115. The active-site N6-AMP-lysine intermediate is the lysine 117. 4 residues coordinate NAD(+): arginine 138, glutamate 172, lysine 288, and lysine 312. Residues cysteine 406, cysteine 409, cysteine 425, and cysteine 430 each contribute to the Zn(2+) site. In terms of domain architecture, BRCT spans 589–678 (VQSKILSNLT…IKNLRQQKLF (90 aa)).

The protein belongs to the NAD-dependent DNA ligase family. LigA subfamily. Requires Mg(2+) as cofactor. Mn(2+) serves as cofactor.

It catalyses the reaction NAD(+) + (deoxyribonucleotide)n-3'-hydroxyl + 5'-phospho-(deoxyribonucleotide)m = (deoxyribonucleotide)n+m + AMP + beta-nicotinamide D-nucleotide.. Its function is as follows. DNA ligase that catalyzes the formation of phosphodiester linkages between 5'-phosphoryl and 3'-hydroxyl groups in double-stranded DNA using NAD as a coenzyme and as the energy source for the reaction. It is essential for DNA replication and repair of damaged DNA. This is DNA ligase from Pseudothermotoga lettingae (strain ATCC BAA-301 / DSM 14385 / NBRC 107922 / TMO) (Thermotoga lettingae).